Reading from the N-terminus, the 638-residue chain is Adhesion G-protein coupled receptor F2 (638 aa).

Positions 1 to 25 are cleaved as a signal peptide; that stretch reads MISARWLYCLVLLLATESCRLFCQA. Residues 26–386 are Extracellular-facing; the sequence is ASKSKENVMP…ESPVLTYITY (361 aa). N-linked (GlcNAc...) asparagine glycosylation is found at Asn155, Asn219, Asn248, Asn293, and Asn311. A GAIN-B domain is found at 233–377; sequence PRNSLGKNFT…SILMSPNTVE (145 aa). 2 cysteine pairs are disulfide-bonded: Cys329/Cys356 and Cys344/Cys358. Positions 329-377 are GPS; the sequence is CVGWHSLESRWDRRACKMIQENSRQAICRCQPNKFFTSFSILMSPNTVE. The helical transmembrane segment at 387–407 threads the bilayer; that stretch reads IGLGISICSLIICLAIEALVW. Residues 408-422 lie on the Cytoplasmic side of the membrane; that stretch reads SQVTKTEISYLRHLC. The helical transmembrane segment at 423–443 threads the bilayer; that stretch reads IANIAVTLLMADVWFIVASFL. Residues 444–465 are Extracellular-facing; that stretch reads SGPIVHHNGCVTATFFVHFFYL. Residues 466–486 form a helical membrane-spanning segment; that stretch reads SVFFWMLAKALLILYGILIVF. The Cytoplasmic portion of the chain corresponds to 487–493; sequence HTLPKSC. Residues 494-514 traverse the membrane as a helical segment; it reads LVASLFTVGYGCPLVIAVITL. The Extracellular segment spans residues 515–541; sequence AVTEPGKGYLRPEACWLNWDMTKALLA. The chain crosses the membrane as a helical span at residues 542 to 562; it reads FVVPALAIVVVNLITVTLVII. Topologically, residues 563-586 are cytoplasmic; it reads KTQRAAVGSSMFQEVRAIVRICKN. The chain crosses the membrane as a helical span at residues 587–607; sequence IAILTPLLGLTWGFGIATVVA. The Extracellular segment spans residues 608–610; that stretch reads GHS. A helical transmembrane segment spans residues 611–631; that stretch reads LAFHIIFSLLNALQVSPDAMI. Residues 632-638 lie on the Cytoplasmic side of the membrane; it reads ESEWRGC.

This sequence belongs to the G-protein coupled receptor 2 family. Adhesion G-protein coupled receptor (ADGR) subfamily.

It is found in the membrane. Orphan receptor. The chain is Adhesion G-protein coupled receptor F2 (Adgrf2) from Rattus norvegicus (Rat).